The sequence spans 488 residues: Tetratricopeptide repeat protein 23 (488 aa).

TPR repeat units lie at residues 45–78 (LHLC…TRIC), 137–170 (LELF…SKEM), 186–219 (SRIK…TEIT), 228–261 (VQVL…TPQP), and 398–431 (AETY…ETFL).

Associated with the EvC complex composed of EFCAB7, IQCE, EVC2 and EVC.

It localises to the cell projection. It is found in the cilium. Functionally, participates positively in the ciliary Hedgehog (Hh) signaling. In Mus musculus (Mouse), this protein is Tetratricopeptide repeat protein 23 (Ttc23).